The sequence spans 55 residues: uncharacterized protein (55 aa).

The disordered stretch occupies residues 1-25 (MKNNDKKKEVQRKYREEIKKKKQKN). The chain crosses the membrane as a helical span at residues 35 to 55 (TIIVVTIIVLFIFFTYTLQGF).

The protein localises to the membrane. This is an uncharacterized protein from Bacillus subtilis (strain 168).